A 1471-amino-acid chain; its full sequence is Myosin-4 (1471 aa).

The 54-residue stretch at 4-57 (EVGTKCWYPHKEQGWIGGEVTKNDFFEGTFHLELKLEDGETVSIETNSFENDDD) folds into the Myosin N-terminal SH3-like domain. A Myosin motor domain is found at 71-777 (ESTDDLTTLS…MLAFLEKLRT (707 aa)). An ATP-binding site is contributed by 165 to 172 (GESGAGKT). The actin-binding stretch occupies residues 647–669 (LGELMAIINSTNVHYIRCIKPNS). 5 consecutive IQ domains span residues 781–801 (NEICIIIQKKIRARYYRLQYL), 804–824 (MESIKKCQSQIRSLLVRTRVD), 829–849 (TRAAILLQTNIRALWKREYYR), 876–898 (MLMAAVIIQSYIRSYGHKTDYRT), and 899–928 (LKRSSILVQSAMRMQLARRRYIVLQKEVEE). Residues 938–1063 (GLLEEAIEFK…LAFIENVIAQ (126 aa)) are a coiled coil. One can recognise a Dilute domain in the interval 1164-1419 (SKVLLTVESI…LNYLANVIKR (256 aa)).

The protein belongs to the TRAFAC class myosin-kinesin ATPase superfamily. Myosin family. In terms of assembly, interacts with SHE2 and SHE3.

Its subcellular location is the bud. Functionally, part of the mRNA localization machinery that restricts accumulation of certain proteins to the bud and in the daughter cell. Recruited to specific mRNAs including the ASH1 mRNA, coding for a repressor of the HO endonuclease, via its interaction with SHE3. This is Myosin-4 (MYO4) from Saccharomyces cerevisiae (strain ATCC 204508 / S288c) (Baker's yeast).